The chain runs to 1648 residues: Cortactin-binding protein 2 (1648 aa).

5 disordered regions span residues 1 to 26 (MATD…TAEA), 200 to 250 (EEKK…EEAH), 322 to 439 (PLTV…PGLN), 451 to 476 (GNAN…PTSR), and 492 to 608 (ALSR…PSID). Residues 119 to 274 (KMQERMSAQL…MEQMKKGSDG (156 aa)) adopt a coiled-coil conformation. 2 stretches are compositionally biased toward basic and acidic residues: residues 200–218 (EEKK…EKQR) and 225–250 (QLEK…EEAH). 2 stretches are compositionally biased toward polar residues: residues 330–342 (STGS…NTKG) and 372–392 (LPSS…APDL). A compositionally biased stretch (low complexity) spans 393 to 415 (SNSTPSTPSSTAPAAAQTPGTAP). Over residues 492–503 (ALSRFTSPQAGA) the composition is skewed to polar residues. Arg495 bears the Asymmetric dimethylarginine mark. ANK repeat units follow at residues 699–729 (GRPT…DINY), 733–762 (DGHS…RVDA), 766–795 (NGFT…NINH), 799–828 (GGQT…DRSI), 832–861 (DGWT…RAHG), and 901–931 (EGWT…EPER). The tract at residues 1438 to 1492 (SGAWRKVNTSPRKKPGHFSSPTWNKPDPKREGMRNKTIPHLNTNRNSSLSKQQSL) is disordered. Residues 1477–1492 (HLNTNRNSSLSKQQSL) show a composition bias toward polar residues. The residue at position 1510 (Ser1510) is a Phosphoserine. Residues 1522–1648 (SMCSSKSESD…KHEQVEKPNK (127 aa)) form a disordered region. Over residues 1528–1547 (SESDISKIADSRDDLRKFDS) the composition is skewed to basic and acidic residues. 2 stretches are compositionally biased toward polar residues: residues 1548–1557 (SRTNPGTSAP) and 1571–1584 (PPSS…SNSK). The segment covering 1609–1623 (SQNTKRNSSSSNTRQ) has biased composition (low complexity). Residues 1630–1648 (SKEENWTLDKHEQVEKPNK) are compositionally biased toward basic and acidic residues.

Interacts with CTTN/cortactin SH3 domain. Interacts with STRN, STRN4/zinedin and MOB4/phocein; this interactions mediate the association with the STRIPAK core complex and may regulate dendritic spine distribution of the STRIPAK complex in hippocampal neurons. Activation of glutamate receptors weakens the interaction with STRN and STRN4. Isoform 2 is predominantly expressed in brain (at protein level). In the brain, expressed at high levels in hypothalamus and striatum and at lower levels in cerebellum and cortex.

It localises to the cytoplasm. It is found in the cell cortex. Its subcellular location is the cell projection. The protein localises to the dendritic spine. In terms of biological role, regulates the dendritic spine distribution of CTTN/cortactin in hippocampal neurons, and thus controls dendritic spinogenesis and dendritic spine maintenance. Associates with the striatin-interacting phosphatase and kinase (STRIPAK) core complex to regulate dendritic spine distribution of the STRIPAK complex in hippocampal neurons. The polypeptide is Cortactin-binding protein 2 (Cttnbp2) (Mus musculus (Mouse)).